The chain runs to 379 residues: Succinyl-diaminopimelate desuccinylase (379 aa).

H70 provides a ligand contact to Zn(2+). The active site involves D72. D103 is a binding site for Zn(2+). E137 acts as the Proton acceptor in catalysis. Zn(2+) contacts are provided by E138, E166, and H352.

Belongs to the peptidase M20A family. DapE subfamily. As to quaternary structure, homodimer. The cofactor is Zn(2+). Co(2+) serves as cofactor.

It catalyses the reaction N-succinyl-(2S,6S)-2,6-diaminopimelate + H2O = (2S,6S)-2,6-diaminopimelate + succinate. It functions in the pathway amino-acid biosynthesis; L-lysine biosynthesis via DAP pathway; LL-2,6-diaminopimelate from (S)-tetrahydrodipicolinate (succinylase route): step 3/3. Its function is as follows. Catalyzes the hydrolysis of N-succinyl-L,L-diaminopimelic acid (SDAP), forming succinate and LL-2,6-diaminopimelate (DAP), an intermediate involved in the bacterial biosynthesis of lysine and meso-diaminopimelic acid, an essential component of bacterial cell walls. The protein is Succinyl-diaminopimelate desuccinylase of Burkholderia lata (strain ATCC 17760 / DSM 23089 / LMG 22485 / NCIMB 9086 / R18194 / 383).